A 449-amino-acid chain; its full sequence is MELETHLSKYFTLAFTHKSMGLEMREKLAINSSATLKEFLQTIKNHCPNIKECMVLSTCNRFEIYASLKHGAHANEQKSALLKILAQNKKMSVSDLEKCVLMSVDESAVHHVFSVCSSLDSLVVGETQITGQMKNAYKFAFEEKFCSKDLTRLLHFAFKCAAKVRNLTGISKQGVSISSVAVKEALNIFEKERIKDKKALVIGLGEMAQLVIKHLLNKQFEALILGRNEAKFEDFIKELEEPKKVSFQNIENLNAYINEYQLLFCATSSPHFIVQNDMLKETIFRRFWFDLAVPRNIEKPVLDNIFLYSVDDLEPMVRENVENRQESRTKAYEIVGLATMEFYQWIQSLEVEPLIKDLRELARISAQKELQKALKKRYVPKEYESNIEKILHNAFNTFLHHPTIALKKNAQKEESDVLVGAIKNLFNLDKSSANHAQNLNLYKCEYYEE.

Residues T58–R61, S121, E126–Q128, and Q132 contribute to the substrate site. C59 acts as the Nucleophile in catalysis. G203 to A208 serves as a coordination point for NADP(+).

This sequence belongs to the glutamyl-tRNA reductase family. As to quaternary structure, homodimer.

It carries out the reaction (S)-4-amino-5-oxopentanoate + tRNA(Glu) + NADP(+) = L-glutamyl-tRNA(Glu) + NADPH + H(+). The protein operates within porphyrin-containing compound metabolism; protoporphyrin-IX biosynthesis; 5-aminolevulinate from L-glutamyl-tRNA(Glu): step 1/2. Functionally, catalyzes the NADPH-dependent reduction of glutamyl-tRNA(Glu) to glutamate 1-semialdehyde (GSA). The polypeptide is Glutamyl-tRNA reductase (Helicobacter pylori (strain Shi470)).